The primary structure comprises 228 residues: UPF0758 protein Reut_A2732 (228 aa).

An MPN domain is found at 102–224 (GLDSPAAVRS…VHSFAEHGEL (123 aa)). Residues histidine 173, histidine 175, and aspartate 186 each contribute to the Zn(2+) site. The short motif at 173-186 (HNHPSGCCTPSQSD) is the JAMM motif element.

It belongs to the UPF0758 family.

This is UPF0758 protein Reut_A2732 from Cupriavidus pinatubonensis (strain JMP 134 / LMG 1197) (Cupriavidus necator (strain JMP 134)).